Consider the following 931-residue polypeptide: Bifunctional uridylyltransferase/uridylyl-removing enzyme (931 aa).

Residues 1–383 (MDLATTNDAA…RPGTELRRVP (383 aa)) form a uridylyltransferase region. Positions 384-739 (EGDDFIIDNN…VGFDEARGVT (356 aa)) are uridylyl-removing. The HD domain maps to 499–622 (VDEHLLRCIG…VQSVEQMKLL (124 aa)). 2 ACT domains span residues 740–822 (ELTI…VVAR) and 851–931 (VIEV…QSVG).

It belongs to the GlnD family. Mg(2+) is required as a cofactor.

It carries out the reaction [protein-PII]-L-tyrosine + UTP = [protein-PII]-uridylyl-L-tyrosine + diphosphate. The enzyme catalyses [protein-PII]-uridylyl-L-tyrosine + H2O = [protein-PII]-L-tyrosine + UMP + H(+). With respect to regulation, uridylyltransferase (UTase) activity is inhibited by glutamine, while glutamine activates uridylyl-removing (UR) activity. In terms of biological role, modifies, by uridylylation and deuridylylation, the PII regulatory proteins (GlnB and homologs), in response to the nitrogen status of the cell that GlnD senses through the glutamine level. Under low glutamine levels, catalyzes the conversion of the PII proteins and UTP to PII-UMP and PPi, while under higher glutamine levels, GlnD hydrolyzes PII-UMP to PII and UMP (deuridylylation). Thus, controls uridylylation state and activity of the PII proteins, and plays an important role in the regulation of nitrogen assimilation and metabolism. The chain is Bifunctional uridylyltransferase/uridylyl-removing enzyme from Nitrobacter hamburgensis (strain DSM 10229 / NCIMB 13809 / X14).